Here is a 275-residue protein sequence, read N- to C-terminus: 2,3,4,5-tetrahydropyridine-2,6-dicarboxylate N-succinyltransferase (275 aa).

Positions 106 and 143 each coordinate substrate.

The protein belongs to the transferase hexapeptide repeat family. Homotrimer.

It is found in the cytoplasm. The catalysed reaction is (S)-2,3,4,5-tetrahydrodipicolinate + succinyl-CoA + H2O = (S)-2-succinylamino-6-oxoheptanedioate + CoA. The protein operates within amino-acid biosynthesis; L-lysine biosynthesis via DAP pathway; LL-2,6-diaminopimelate from (S)-tetrahydrodipicolinate (succinylase route): step 1/3. The polypeptide is 2,3,4,5-tetrahydropyridine-2,6-dicarboxylate N-succinyltransferase (Burkholderia pseudomallei (strain 1106a)).